The chain runs to 353 residues: Photosystem II protein D1 (353 aa).

Thr-2 bears the N-acetylthreonine mark. Thr-2 is modified (phosphothreonine). Helical transmembrane passes span 29–46 (YIGW…TATS), 118–133 (HFLL…EWEL), and 142–156 (WIAV…AATA). His-118 is a chlorophyll a binding site. Residue Tyr-126 participates in pheophytin a binding. [CaMn4O5] cluster contacts are provided by Asp-170 and Glu-189. Residues 197–218 (FHMLGVAGVFGGSLFSAMHGSL) form a helical membrane-spanning segment. Position 198 (His-198) interacts with chlorophyll a. Residues His-215 and 264–265 (SF) each bind a quinone. Residue His-215 participates in Fe cation binding. Position 272 (His-272) interacts with Fe cation. A helical membrane pass occupies residues 274-288 (FLAAWPVVGIWFTAL). Positions 332, 333, 342, and 344 each coordinate [CaMn4O5] cluster. A propeptide spanning residues 345 to 353 (AVEVPAING) is cleaved from the precursor.

This sequence belongs to the reaction center PufL/M/PsbA/D family. In terms of assembly, PSII is composed of 1 copy each of membrane proteins PsbA, PsbB, PsbC, PsbD, PsbE, PsbF, PsbH, PsbI, PsbJ, PsbK, PsbL, PsbM, PsbT, PsbX, PsbY, PsbZ, Psb30/Ycf12, at least 3 peripheral proteins of the oxygen-evolving complex and a large number of cofactors. It forms dimeric complexes. Requires The D1/D2 heterodimer binds P680, chlorophylls that are the primary electron donor of PSII, and subsequent electron acceptors. It shares a non-heme iron and each subunit binds pheophytin, quinone, additional chlorophylls, carotenoids and lipids. D1 provides most of the ligands for the Mn4-Ca-O5 cluster of the oxygen-evolving complex (OEC). There is also a Cl(-1) ion associated with D1 and D2, which is required for oxygen evolution. The PSII complex binds additional chlorophylls, carotenoids and specific lipids. as cofactor. Tyr-161 forms a radical intermediate that is referred to as redox-active TyrZ, YZ or Y-Z. In terms of processing, C-terminally processed by CTPA; processing is essential to allow assembly of the oxygen-evolving complex and thus photosynthetic growth.

The protein localises to the plastid. Its subcellular location is the chloroplast thylakoid membrane. It carries out the reaction 2 a plastoquinone + 4 hnu + 2 H2O = 2 a plastoquinol + O2. Photosystem II (PSII) is a light-driven water:plastoquinone oxidoreductase that uses light energy to abstract electrons from H(2)O, generating O(2) and a proton gradient subsequently used for ATP formation. It consists of a core antenna complex that captures photons, and an electron transfer chain that converts photonic excitation into a charge separation. The D1/D2 (PsbA/PsbD) reaction center heterodimer binds P680, the primary electron donor of PSII as well as several subsequent electron acceptors. The protein is Photosystem II protein D1 of Hordeum vulgare (Barley).